The sequence spans 415 residues: MKAVGLVVEYNPFHNGHLYHAQTAKLQTGCDTAVAVMSGHFLQRGEPAVVSKWARTKMALQSGVDLVIELPYLYAVQKADIFARGSVSILNELECEALFFGSENGDIKPFLETAQLIDEHKHILNDRIKEELKKGASYPAAAAIAFSSILHTESALDLSKPNNILGYQYVTSILTGGYPMKPYTTARISSDYHDADLPEGENHIASATSIRKAMIGQNLEACLRFLPAASARELAAYRKSFGLWHTPESYFSYLKYSLSTVTARELQQVYEVEEGLEHRIIRSIRKSSSYQEFMELLKTKRYTWTRLQRMNTHILTRTKKQDMQKLLDNDKAPYIRLLGMTKKGQAYLSEKKKALSVPLVSKLSSFSHPALDLDVKASRIYSLPIEEPLRTEFDLQEYGHAPIRYDEDEQHFLNV.

ATP-binding positions include 7-20 (VVEYNPFHNGHLYH), Gly101, Asn162, and 187-188 (RI).

Belongs to the TmcAL family. In terms of assembly, homodimer.

The protein localises to the cytoplasm. The enzyme catalyses cytidine(34) in elongator tRNA(Met) + acetate + ATP = N(4)-acetylcytidine(34) in elongator tRNA(Met) + AMP + diphosphate. In terms of biological role, catalyzes the formation of N(4)-acetylcytidine (ac(4)C) at the wobble position of elongator tRNA(Met), using acetate and ATP as substrates. First activates an acetate ion to form acetyladenylate (Ac-AMP) and then transfers the acetyl group to tRNA to form ac(4)C34. This chain is tRNA(Met) cytidine acetate ligase, found in Bacillus subtilis (strain 168).